A 202-amino-acid chain; its full sequence is Orotate phosphoribosyltransferase (202 aa).

Residues K93 and 113–121 (EDIITTGGS) each bind 5-phospho-alpha-D-ribose 1-diphosphate. Residues T117 and R145 each contribute to the orotate site.

Belongs to the purine/pyrimidine phosphoribosyltransferase family. PyrE subfamily. As to quaternary structure, homodimer. It depends on Mg(2+) as a cofactor.

It catalyses the reaction orotidine 5'-phosphate + diphosphate = orotate + 5-phospho-alpha-D-ribose 1-diphosphate. Its pathway is pyrimidine metabolism; UMP biosynthesis via de novo pathway; UMP from orotate: step 1/2. In terms of biological role, catalyzes the transfer of a ribosyl phosphate group from 5-phosphoribose 1-diphosphate to orotate, leading to the formation of orotidine monophosphate (OMP). In Campylobacter curvus (strain 525.92), this protein is Orotate phosphoribosyltransferase.